A 111-amino-acid polypeptide reads, in one-letter code: PCNA-associated factor (111 aa).

The residue at position 8 (S8) is a Phosphoserine. Residue K15 forms a Glycyl lysine isopeptide (Lys-Gly) (interchain with G-Cter in ubiquitin) linkage. A D-box motif is present at residues 23 to 34; the sequence is RKVLGSSTSATN. The tract at residues 23–111 is disordered; the sequence is RKVLGSSTSA…QPDHTNDEKE (89 aa). Position 24 is an N6-acetyllysine; alternate (K24). Residue K24 forms a Glycyl lysine isopeptide (Lys-Gly) (interchain with G-Cter in ubiquitin); alternate linkage. Phosphoserine occurs at positions 28, 31, and 72. Residues 28 to 40 are compositionally biased toward low complexity; that stretch reads SSTSATNSTSVSS. A PIP-box motif is present at residues 62–72; the sequence is QKGIGEFFRLS. Positions 72-81 are enriched in basic and acidic residues; sequence SPKDSEKENQ. The KEN box motif lies at 78–80; the sequence is KEN. The short motif at 85–97 is the Initiation motif element; it reads EAGSSGLGKAKRK.

In terms of assembly, interacts (when monoubiquitinated at Lys-15 and Lys-24) with PCNA. Interacts with isoform 2/p33ING1b of ING1. Interacts with BRCA1. Post-translationally, monoubiquitinated at Lys-15 and Lys-24 during normal S phase, promoting its association with PCNA. Also diubiquitinated at these 2 sites. Following DNA damage, monoubiquitin chains at Lys-15 and Lys-24 are probably extended, leading to disrupt the interaction with PCNA. Polyubiquitinated by the APC/C complex at the mitotic exit, leading to its degradation by the proteasome. As to expression, expressed predominantly in liver, pancreas and placenta. Not detected in heart or brain. Highly expressed in a number of tumors, especially esophageal tumors, in anaplastic thyroid carcinomas, adrenocortical carcinomas, and in non-small-cell lung cancer lines.

Its subcellular location is the nucleus. It is found in the cytoplasm. The protein localises to the perinuclear region. Functionally, PCNA-binding protein that acts as a regulator of DNA repair during DNA replication. Following DNA damage, the interaction with PCNA is disrupted, facilitating the interaction between monoubiquitinated PCNA and the translesion DNA synthesis DNA polymerase eta (POLH) at stalled replisomes, facilitating the bypass of replication-fork-blocking lesions. Also acts as a regulator of centrosome number. The polypeptide is PCNA-associated factor (Homo sapiens (Human)).